A 210-amino-acid polypeptide reads, in one-letter code: Glutathione S-transferase P 1 (210 aa).

Positions 2 to 81 (PPYTIVYFPV…HLGRSLGLYG (80 aa)) constitute a GST N-terminal domain. Tyr4 is subject to Phosphotyrosine; by EGFR. Residues Tyr8, Arg14, Trp39, Lys45, and 52 to 53 (QL) each bind glutathione. Residue Thr62 is modified to Phosphothreonine. 65–66 (QS) lines the glutathione pocket. In terms of domain architecture, GST C-terminal spans 83-204 (NQREAAQMDM…SSPEHVNRPI (122 aa)). Residues Lys103 and Lys116 each carry the N6-succinyllysine modification. An N6-acetyllysine modification is found at Lys128.

In terms of assembly, homodimer. Interacts with CDK5. As to expression, ubiquitously expressed.

It is found in the cytoplasm. Its subcellular location is the mitochondrion. The protein resides in the nucleus. The catalysed reaction is RX + glutathione = an S-substituted glutathione + a halide anion + H(+). The enzyme catalyses prostaglandin J2 + glutathione = prostaglandin J2-S-(R)-glutathione. It catalyses the reaction prostaglandin J2 + glutathione = prostaglandin J2-S-(S)-glutathione. It carries out the reaction prostaglandin A2 + glutathione = prostaglandin A2-S-(S)-glutathione. The catalysed reaction is 11(S)-hydroxy-14(S),15(S)-epoxy-(5Z,8Z,12E)-eicosatrienoate + glutathione = (11S,15S)-dihydroxy-14(R)-S-glutathionyl-(5Z,8Z,12E)-eicosatrienoate. In terms of biological role, conjugation of reduced glutathione to a wide number of exogenous and endogenous hydrophobic electrophiles. Involved in the formation of glutathione conjugates of both prostaglandin A2 (PGA2) and prostaglandin J2 (PGJ2). Participates in the formation of novel hepoxilin regioisomers. Negatively regulates CDK5 activity via p25/p35 translocation to prevent neurodegeneration. This is Glutathione S-transferase P 1 from Mus musculus (Mouse).